The following is a 149-amino-acid chain: Large ribosomal subunit protein bL9 (149 aa).

The protein belongs to the bacterial ribosomal protein bL9 family.

Functionally, binds to the 23S rRNA. In Aquifex aeolicus (strain VF5), this protein is Large ribosomal subunit protein bL9.